Here is a 235-residue protein sequence, read N- to C-terminus: NAD(P)H-hydrate epimerase (235 aa).

The YjeF N-terminal domain occupies 18 to 221; that stretch reads AAQIDEQLFT…SLVDEHELLM (204 aa). 65-69 contributes to the (6S)-NADPHX binding site; that stretch reads NNGGD. Residues Asn-66 and Asp-127 each coordinate K(+). Residues 131–137 and Asp-160 each bind (6S)-NADPHX; that span reads GFSFHPP. Ser-163 is a K(+) binding site.

It belongs to the NnrE/AIBP family. It depends on K(+) as a cofactor.

The enzyme catalyses (6R)-NADHX = (6S)-NADHX. The catalysed reaction is (6R)-NADPHX = (6S)-NADPHX. Functionally, catalyzes the epimerization of the S- and R-forms of NAD(P)HX, a damaged form of NAD(P)H that is a result of enzymatic or heat-dependent hydration. This is a prerequisite for the S-specific NAD(P)H-hydrate dehydratase to allow the repair of both epimers of NAD(P)HX. This chain is NAD(P)H-hydrate epimerase, found in Caenorhabditis elegans.